Here is a 110-residue protein sequence, read N- to C-terminus: Cell cycle protein GpsB (110 aa).

Positions 37–63 form a coiled coil; that stretch reads KDYTVYIALVKELQEENAKLKAKATSA. Residues 59 to 79 are disordered; sequence KATSAPASRPAYASATSEPSH. Low complexity predominate over residues 60–75; that stretch reads ATSAPASRPAYASATS.

This sequence belongs to the GpsB family. Forms polymers through the coiled coil domains. Interacts with PBP1, MreC and EzrA.

The protein resides in the cytoplasm. Its function is as follows. Divisome component that associates with the complex late in its assembly, after the Z-ring is formed, and is dependent on DivIC and PBP2B for its recruitment to the divisome. Together with EzrA, is a key component of the system that regulates PBP1 localization during cell cycle progression. Its main role could be the removal of PBP1 from the cell pole after pole maturation is completed. Also contributes to the recruitment of PBP1 to the division complex. Not essential for septum formation. The chain is Cell cycle protein GpsB from Streptococcus thermophilus (strain CNRZ 1066).